The primary structure comprises 334 residues: MLDDRSKLLLKALVERYIAEGQPVGSRTLSRASGLELSPATIRNVMADLEDLGLIASPHTSAGRVPTAKGYRLFVDTMLTVQQEQLPTVQLMPEQPQKVIANAAHLLSSLSQFVGVVMAPRRASVFRHIEFLRLSEKRFLVIIVSPDGDVQNRVIFTEADYSQSQLVEAANFLNANYAGLTMEQVRERLKLEVDKLRGEIAALMQAAVSVDSEAMSGSQDEVVFSGERNLLSVSDFSSDMSHLRRAFDLFEQKTQILRLLDISSRAEGVRIFIGGESQVVPFEELSVVSAPYEVDGQVVGTLGVIGPTRMPYDRMIQIVDITSKLVSNALSHRK.

The protein belongs to the HrcA family.

In terms of biological role, negative regulator of class I heat shock genes (grpE-dnaK-dnaJ and groELS operons). Prevents heat-shock induction of these operons. In Acidovorax ebreus (strain TPSY) (Diaphorobacter sp. (strain TPSY)), this protein is Heat-inducible transcription repressor HrcA.